The primary structure comprises 280 residues: Four and a half LIM domains protein 1 (280 aa).

Position 2 is an N-acetylserine (serine 2). Lysine 4 carries the N6-acetyllysine modification. The C4-type zinc finger occupies 7–31; that stretch reads CHYCRDPLQGKKYVQKDGRHCCLKC. 4 consecutive LIM zinc-binding domains span residues 40–92, 101–153, 162–212, and 221–276; these read CVEC…CNKC, CKGC…CVTC, CVKC…CVDC, and CAGC…CPDC. A Glycyl lysine isopeptide (Lys-Gly) (interchain with G-Cter in SUMO2) cross-link involves residue lysine 86.

It is found in the cytoplasm. Its function is as follows. May have an involvement in muscle development or hypertrophy. Isoform 2 binds to RBP-J and plays a negative regulatory role in the RBP-J-mediated transcription in mammalian systems. This chain is Four and a half LIM domains protein 1 (Fhl1), found in Rattus norvegicus (Rat).